Consider the following 96-residue polypeptide: DNA/RNA-binding protein Alba (96 aa).

Belongs to the histone-like Alba family.

It is found in the cytoplasm. It localises to the chromosome. Binds double-stranded DNA tightly but without sequence specificity. Involved in DNA compaction. In Methanocella arvoryzae (strain DSM 22066 / NBRC 105507 / MRE50), this protein is DNA/RNA-binding protein Alba.